A 324-amino-acid polypeptide reads, in one-letter code: Transcription factor TCP24 (324 aa).

In terms of domain architecture, TCP spans 50–108; sequence GKDRHSKVLTSKGLRDRRIRLSVATAIQFYDLQDRLGFDQPSKAVEWLINAASDSITDL. Disordered regions lie at residues 122-215 and 261-297; these read QNQT…PMNH and QRSS…NHQL. The segment covering 127 to 142 has biased composition (low complexity); sequence SACSSGTSESSLLSLS. The region spanning 144–162 is the R domain; it reads TEIRGKARERARERTAKDR. Basic and acidic residues predominate over residues 144–167; sequence TEIRGKARERARERTAKDRDKDLQ. 2 stretches are compositionally biased toward polar residues: residues 168 to 192 and 200 to 212; these read NAHS…NWTG and VQLQ…SQEP. The segment covering 261–281 has biased composition (low complexity); that stretch reads QRSSISSSSSSSSPMDSQSIS.

As to quaternary structure, forms a heterodimeric complex with ABAP1. Interacts with SPL. As to expression, expressed in cotyledons, particularly in the vascular region, in leaves, roots, stems, buds, flowers and siliques.

The protein localises to the nucleus. Functionally, plays a pivotal role in the control of morphogenesis of shoot organs by negatively regulating the expression of boundary-specific genes such as CUC genes, probably through the induction of miRNA (e.g. miR164). In association with ABAP1, exerts a negative role in cell proliferation in leaves, possibly by inhibiting mitotic DNA replication. Participates in ovule development. This is Transcription factor TCP24 (TCP24) from Arabidopsis thaliana (Mouse-ear cress).